A 632-amino-acid chain; its full sequence is tRNA uridine 5-carboxymethylaminomethyl modification enzyme MnmG (632 aa).

Residues 15-20 (GAGHAG), Ile127, and Ser182 contribute to the FAD site. 276–290 (GPRYCPSIEDKIVRF) is a binding site for NAD(+). Gln373 serves as a coordination point for FAD.

It belongs to the MnmG family. As to quaternary structure, homodimer. Heterotetramer of two MnmE and two MnmG subunits. The cofactor is FAD.

It is found in the cytoplasm. In terms of biological role, NAD-binding protein involved in the addition of a carboxymethylaminomethyl (cmnm) group at the wobble position (U34) of certain tRNAs, forming tRNA-cmnm(5)s(2)U34. This is tRNA uridine 5-carboxymethylaminomethyl modification enzyme MnmG from Streptococcus pyogenes serotype M28 (strain MGAS6180).